A 239-amino-acid chain; its full sequence is Aspartate/glutamate leucyltransferase (239 aa).

This sequence belongs to the R-transferase family. Bpt subfamily.

It localises to the cytoplasm. The enzyme catalyses N-terminal L-glutamyl-[protein] + L-leucyl-tRNA(Leu) = N-terminal L-leucyl-L-glutamyl-[protein] + tRNA(Leu) + H(+). It catalyses the reaction N-terminal L-aspartyl-[protein] + L-leucyl-tRNA(Leu) = N-terminal L-leucyl-L-aspartyl-[protein] + tRNA(Leu) + H(+). Functionally, functions in the N-end rule pathway of protein degradation where it conjugates Leu from its aminoacyl-tRNA to the N-termini of proteins containing an N-terminal aspartate or glutamate. In Campylobacter jejuni subsp. jejuni serotype O:2 (strain ATCC 700819 / NCTC 11168), this protein is Aspartate/glutamate leucyltransferase.